Consider the following 97-residue polypeptide: UPF0729 protein AAEL015238 (97 aa).

A disordered region spans residues 69-97; it reads EVAASGSGSNGTATAVGSEGEAEETKKSQ. A compositionally biased stretch (polar residues) spans 74–83; it reads GSGSNGTATA.

It belongs to the UPF0729 family.

The sequence is that of UPF0729 protein AAEL015238 from Aedes aegypti (Yellowfever mosquito).